A 253-amino-acid polypeptide reads, in one-letter code: tRNA-cytidine(32) 2-sulfurtransferase 2 (253 aa).

The PP-loop motif motif lies at 33–38 (SGGKDS). Positions 108, 111, and 199 each coordinate [4Fe-4S] cluster.

This sequence belongs to the TtcA family. As to quaternary structure, homodimer. The cofactor is Mg(2+). Requires [4Fe-4S] cluster as cofactor.

It localises to the cytoplasm. The catalysed reaction is cytidine(32) in tRNA + S-sulfanyl-L-cysteinyl-[cysteine desulfurase] + AH2 + ATP = 2-thiocytidine(32) in tRNA + L-cysteinyl-[cysteine desulfurase] + A + AMP + diphosphate + H(+). It functions in the pathway tRNA modification. Its function is as follows. Catalyzes the ATP-dependent 2-thiolation of cytidine in position 32 of tRNA, to form 2-thiocytidine (s(2)C32). The sulfur atoms are provided by the cysteine/cysteine desulfurase (IscS) system. This is tRNA-cytidine(32) 2-sulfurtransferase 2 from Francisella tularensis subsp. novicida (strain U112).